A 257-amino-acid polypeptide reads, in one-letter code: Triosephosphate isomerase (257 aa).

Positions 12 and 14 each coordinate substrate. The active-site Electrophile is the His98. Glu169 acts as the Proton acceptor in catalysis.

Belongs to the triosephosphate isomerase family. Homodimer.

It catalyses the reaction D-glyceraldehyde 3-phosphate = dihydroxyacetone phosphate. The protein operates within carbohydrate biosynthesis; gluconeogenesis. It functions in the pathway carbohydrate degradation; glycolysis; D-glyceraldehyde 3-phosphate from glycerone phosphate: step 1/1. The polypeptide is Triosephosphate isomerase (tpiA) (Dictyostelium discoideum (Social amoeba)).